A 1453-amino-acid polypeptide reads, in one-letter code: DNA-directed RNA polymerase IV subunit 1 (1453 aa).

C56, C59, C67, H70, C97, C100, and C121 together coordinate Zn(2+). Mg(2+)-binding residues include D447, D449, and D451. The bridging helix stretch occupies residues 806–818; that stretch reads PLESFVHSVTSRD.

Belongs to the RNA polymerase beta' chain family. Component of the RNA polymerase IV complex. Interacts with NRPD2, NRPD3, NRPD3B, NRPD4, NRPD5, NRPD5B, NRPD6A, NRPD7, NRPD7B, NRPD9A, NRPD9B, NRPD10, NRPD11, NRPD12, RDR2, RDM4, CLSY1, CLSY2, CLSY3, CLSY4 and SHH1. Mostly expressed in flowers, and, to a lower extent, in leaves.

It is found in the nucleus. The catalysed reaction is RNA(n) + a ribonucleoside 5'-triphosphate = RNA(n+1) + diphosphate. Functionally, DNA-dependent RNA polymerase catalyzes the transcription of DNA into RNA using the four ribonucleoside triphosphates as substrates. Largest and catalytic component of RNA polymerase IV which mediates 24-nt short-interfering RNAs (siRNA) accumulation. Implicated in siRNA-directed heterochromatin formation through the action of DCL3 and AGO4, and subsequent DNA methylation-dependent silencing of targeted sequences. Essential component of a self-reinforcing loop coupling de novo DNA methylation to siRNA production. Required for intercellular but not intracellular RNA interference (RNAi) leading to systemic post-transcriptional gene silencing. Involved in the maintenance of post-transcriptional RNA silencing. The sequence is that of DNA-directed RNA polymerase IV subunit 1 (NRPD1) from Arabidopsis thaliana (Mouse-ear cress).